The primary structure comprises 310 residues: tRNA-cytidine(32) 2-sulfurtransferase (310 aa).

The short motif at 48–53 is the PP-loop motif element; it reads SGGKDS. Residues C123, C126, and C214 each contribute to the [4Fe-4S] cluster site.

It belongs to the TtcA family. In terms of assembly, homodimer. The cofactor is Mg(2+). It depends on [4Fe-4S] cluster as a cofactor.

Its subcellular location is the cytoplasm. The enzyme catalyses cytidine(32) in tRNA + S-sulfanyl-L-cysteinyl-[cysteine desulfurase] + AH2 + ATP = 2-thiocytidine(32) in tRNA + L-cysteinyl-[cysteine desulfurase] + A + AMP + diphosphate + H(+). Its pathway is tRNA modification. Its function is as follows. Catalyzes the ATP-dependent 2-thiolation of cytidine in position 32 of tRNA, to form 2-thiocytidine (s(2)C32). The sulfur atoms are provided by the cysteine/cysteine desulfurase (IscS) system. In Vibrio cholerae serotype O1 (strain ATCC 39315 / El Tor Inaba N16961), this protein is tRNA-cytidine(32) 2-sulfurtransferase.